The following is a 201-amino-acid chain: Small ribosomal subunit protein uS4c (201 aa).

Residues 15–43 (LGALPGLTNKRPRAGSDLRNQSRSGKKSQ) form a disordered region. In terms of domain architecture, S4 RNA-binding spans 89 to 152 (MRLDNILFRL…NSRTLIQNSL (64 aa)).

It belongs to the universal ribosomal protein uS4 family. In terms of assembly, part of the 30S ribosomal subunit. Contacts protein S5. The interaction surface between S4 and S5 is involved in control of translational fidelity.

It is found in the plastid. Its subcellular location is the chloroplast. Functionally, one of the primary rRNA binding proteins, it binds directly to 16S rRNA where it nucleates assembly of the body of the 30S subunit. With S5 and S12 plays an important role in translational accuracy. The protein is Small ribosomal subunit protein uS4c (rps4) of Panax ginseng (Korean ginseng).